The chain runs to 134 residues: ATP synthase epsilon chain, chloroplastic (134 aa).

Belongs to the ATPase epsilon chain family. As to quaternary structure, F-type ATPases have 2 components, CF(1) - the catalytic core - and CF(0) - the membrane proton channel. CF(1) has five subunits: alpha(3), beta(3), gamma(1), delta(1), epsilon(1). CF(0) has three main subunits: a, b and c.

Its subcellular location is the plastid. It localises to the chloroplast thylakoid membrane. Produces ATP from ADP in the presence of a proton gradient across the membrane. In Gracilaria tenuistipitata var. liui (Red alga), this protein is ATP synthase epsilon chain, chloroplastic.